Here is a 352-residue protein sequence, read N- to C-terminus: MGTVPANPFKIIQLAFKETVPKAHAELQKWHQEALKIEDVEIREQAAWTVNDKTFHCEGGSIFALLAGENKDNHIQFLVAYQTICDYLDTLCDKNDAHDPNDFRSIHQALLDCLTPDKPYGDYYQYRDRFEDNGYLRKLVDACREATASFPGFADMQTHMQEVSQFYIDFQVYKHVEEEKREPLLKDFYERNKHFAPTMRWYEFACGTASTLALYCMAAYAAAPVQTAQGQQIKEAYFTWVQGVHILLDYFIDQEEDRQENEMNFVAYYRDSKEMFERFKYIDEKATEKLQMLPDKKFHLLLKTGLYALYLSDKKVMSHPRLKAEAKQLIKLGGFPASLFYYNRWIFKRKIS.

The protein belongs to the large terpene synthase family.

It carries out the reaction (2E,6E,10E,14E)-geranylfarnesyl diphosphate = beta-geranylfarnesene + diphosphate. The catalysed reaction is all-trans-hexaprenyl diphosphate = beta-hexaprene + diphosphate. It catalyses the reaction all-trans-heptaprenyl diphosphate = beta-heptaprene + diphosphate. Catalyzes the conversion of geranylfarnesyl diphosphate (GFPP) and hexaprenyl diphosphate (HexPP) into beta-geranylfarnesene and beta-hexaprene, respectively. Also produces beta-heptaprene from heptaprenyl diphosphate (HepPP) as a minor product. The chain is Trifunctional sesterterpene/triterpene/sesquarterpene synthase from Shouchella clausii (Alkalihalobacillus clausii).